Reading from the N-terminus, the 172-residue chain is MEYFNVGKIVNTQGLQGEMRVLSVTDFVEERFKKGQVLALFDEKNQFVMDIEIASHRKQKNFDIIKFKGMYHINDIEKYKGFTLKVAEDQLSDLKDGEFYYHEIIGLDVYEGEELIGKIKEILQPGANDVWVVERHGKRDLLLPYIPPVVLEVDLSNQRVQVELMEGLDDED.

Residues 96-168 (DGEFYYHEII…RVQVELMEGL (73 aa)) enclose the PRC barrel domain.

Belongs to the RimM family. In terms of assembly, binds ribosomal protein uS19.

It is found in the cytoplasm. In terms of biological role, an accessory protein needed during the final step in the assembly of 30S ribosomal subunit, possibly for assembly of the head region. Essential for efficient processing of 16S rRNA. May be needed both before and after RbfA during the maturation of 16S rRNA. It has affinity for free ribosomal 30S subunits but not for 70S ribosomes. The polypeptide is Ribosome maturation factor RimM (Streptococcus agalactiae serotype III (strain NEM316)).